The primary structure comprises 92 residues: UPF0298 protein ABC2380 (92 aa).

This sequence belongs to the UPF0298 family.

The protein resides in the cytoplasm. In Shouchella clausii (strain KSM-K16) (Alkalihalobacillus clausii), this protein is UPF0298 protein ABC2380.